Reading from the N-terminus, the 2554-residue chain is DnaJ homolog subfamily C GRV2 (2554 aa).

Disordered stretches follow at residues 746-766 (DVVD…KRLL) and 810-833 (QRRA…GVDS). Residues 815 to 825 (DSSSEASNPQA) are compositionally biased toward polar residues. Coiled-coil stretches lie at residues 925–951 (TRQE…EDIS) and 1518–1546 (RTAS…LKRQ). Residues 1524–1606 (LNEEISNISK…AQCILYRRYG (83 aa)) form the J domain. 2 disordered regions span residues 1960–1994 (IEDR…SSEG) and 2339–2366 (SGEV…GQTP). Residues 1966-1977 (SNDTPELQSSVA) are compositionally biased toward polar residues. The segment covering 1982–1994 (IEEHSDHQPSSEG) has biased composition (basic and acidic residues). Residues 2352-2366 (VNESTDPSSLPGQTP) are compositionally biased toward polar residues.

In terms of tissue distribution, constitutively expressed in roots, hypocotyls, leaves (e.g. vascular tissues), stems, flowers (e.g. petals and stigmas), siliques and pollen.

It localises to the endosome membrane. Required for endosome formation, vacuolar protein sorting and determination of the embryo growth axis. Necessary for the transport of proteins into protein storage vacuoles (PSVs). Participates in vesicle trafficking from the endosome to the central vacuole. Involved in the regulation of shoot phototropism and gravitropism, probably through the positioning of specialized amyloplasts (statoliths) in endodermal cells. In Arabidopsis thaliana (Mouse-ear cress), this protein is DnaJ homolog subfamily C GRV2 (GRV2).